A 289-amino-acid polypeptide reads, in one-letter code: Protease HtpX (289 aa).

2 helical membrane-spanning segments follow: residues 7–27 (LFLL…NIIF) and 38–58 (GGIL…SLFM). H144 contributes to the Zn(2+) binding site. The active site involves E145. A Zn(2+)-binding site is contributed by H148. 2 consecutive transmembrane segments (helical) span residues 155–175 (VTMT…SRII) and 194–214 (LVFW…ATMI). Zn(2+) is bound at residue E223.

The protein belongs to the peptidase M48B family. Zn(2+) is required as a cofactor.

Its subcellular location is the cell inner membrane. This Actinobacillus pleuropneumoniae serotype 5b (strain L20) protein is Protease HtpX.